Reading from the N-terminus, the 260-residue chain is HTH-type transcriptional activator FapR (260 aa).

Residues 154–251 enclose the HTH araC/xylS-type domain; that stretch reads ERIVTLLFSD…GVTPKKFEIG (98 aa). 2 DNA-binding regions (H-T-H motif) span residues 171 to 192 and 218 to 241; these read SDIA…EQEC and IGMI…KEYY.

As to quaternary structure, homodimer.

Functionally, positive regulator of the expression of the 987P operon for the fimbrial protein in enterotoxigenic E.coli. In Escherichia coli, this protein is HTH-type transcriptional activator FapR.